The chain runs to 167 residues: Photosystem I assembly protein Ycf3 (167 aa).

TPR repeat units lie at residues 35–68, 72–105, and 120–153; these read AFSY…ETDA, SYIL…NPSL, and GEQA…APTN.

It belongs to the Ycf3 family.

The protein localises to the plastid. It is found in the chloroplast thylakoid membrane. Functionally, essential for the assembly of the photosystem I (PSI) complex. May act as a chaperone-like factor to guide the assembly of the PSI subunits. In Chlorella vulgaris (Green alga), this protein is Photosystem I assembly protein Ycf3.